The following is a 122-amino-acid chain: Large ribosomal subunit protein uL14 (122 aa).

This sequence belongs to the universal ribosomal protein uL14 family. Part of the 50S ribosomal subunit. Forms a cluster with proteins L3 and L19. In the 70S ribosome, L14 and L19 interact and together make contacts with the 16S rRNA in bridges B5 and B8.

Its function is as follows. Binds to 23S rRNA. Forms part of two intersubunit bridges in the 70S ribosome. This is Large ribosomal subunit protein uL14 from Mycoplasmopsis pulmonis (strain UAB CTIP) (Mycoplasma pulmonis).